The sequence spans 1809 residues: Proprotein convertase subtilisin/kexin type 5 (1809 aa).

The first 34 residues, Met-1–Thr-34, serve as a signal peptide directing secretion. Positions Arg-35–Arg-116 are excised as a propeptide. Residues Asp-117–Thr-1700 are Extracellular-facing. The Peptidase S8 domain occupies Met-136 to Val-455. Residues Asp-173 and His-214 each act as charge relay system in the active site. N-linked (GlcNAc...) asparagine glycosylation is found at Asn-227 and Asn-383. Catalysis depends on Ser-388, which acts as the Charge relay system. One can recognise a P/Homo B domain in the interval Thr-463 to Gln-603. The short motif at Arg-521 to Asp-523 is the Cell attachment site element. 21 FU repeats span residues Glu-632–His-682, Lys-685–Gln-732, Lys-736–Phe-779, Gly-781–Leu-826, Tyr-834–Ile-881, Gln-884–Glu-929, Lys-931–Glu-964, Tyr-965–Gly-1010, Lys-1012–Gly-1054, Leu-1058–Pro-1099, Thr-1137–Leu-1179, Ser-1183–Ala-1230, Asp-1232–Ala-1276, Glu-1278–Pro-1321, Met-1323–Lys-1369, Asn-1373–Trp-1418, Ser-1422–Thr-1467, Ser-1471–Gly-1516, Ser-1520–Ala-1567, Ala-1571–Arg-1616, and Asn-1622–His-1669. A CRM (Cys-rich motif) region spans residues Cys-638–Ile-1685. N-linked (GlcNAc...) asparagine glycosylation occurs at Asn-667. N-linked (GlcNAc...) asparagine glycans are attached at residues Asn-754, Asn-804, and Asn-854. N-linked (GlcNAc...) asparagine glycosylation is found at Asn-1642 and Asn-1664. Residues Ala-1701 to Trp-1721 traverse the membrane as a helical segment. The Cytoplasmic segment spans residues Arg-1722–Gln-1809. AC regions lie at residues Val-1757 to Met-1776 and Tyr-1788 to Gln-1809.

It belongs to the peptidase S8 family. In terms of tissue distribution, expressed in the intestine, brain, adrenal gland, anterior pituitary, thyroid, ovaries, testis and lung. Highest levels are found in the gut, duodenum, jejunum and ileum. Expression is higher in female than in male reproductive organs.

It localises to the secreted. It is found in the endomembrane system. Functionally, serine endoprotease that processes various proproteins by cleavage at paired basic amino acids, recognizing the RXXX[KR]R consensus motif. Likely functions in the constitutive and regulated secretory pathways. Plays an essential role in pregnancy establishment by proteolytic activation of a number of important factors such as BMP2, CALD1 and alpha-integrins. May be responsible for the maturation of gastrointestinal peptides. May be involved in the cellular proliferation of adrenal cortex via the activation of growth factors. The sequence is that of Proprotein convertase subtilisin/kexin type 5 (Pcsk5) from Rattus norvegicus (Rat).